The following is a 324-amino-acid chain: UDP-N-acetylenolpyruvoylglucosamine reductase (324 aa).

The FAD-binding PCMH-type domain occupies 36–211; sequence FRAGGLAELM…AEDKAKIRND (176 aa). R183 is a catalytic residue. S232 serves as the catalytic Proton donor. E302 is an active-site residue.

This sequence belongs to the MurB family. Requires FAD as cofactor.

The protein resides in the cytoplasm. The catalysed reaction is UDP-N-acetyl-alpha-D-muramate + NADP(+) = UDP-N-acetyl-3-O-(1-carboxyvinyl)-alpha-D-glucosamine + NADPH + H(+). Its pathway is cell wall biogenesis; peptidoglycan biosynthesis. Functionally, cell wall formation. This chain is UDP-N-acetylenolpyruvoylglucosamine reductase, found in Sinorhizobium medicae (strain WSM419) (Ensifer medicae).